Here is a 389-residue protein sequence, read N- to C-terminus: Chalcone synthase 3 (389 aa).

Cys164 is a catalytic residue.

Belongs to the thiolase-like superfamily. Chalcone/stilbene synthases family.

The catalysed reaction is (E)-4-coumaroyl-CoA + 3 malonyl-CoA + 3 H(+) = 2',4,4',6'-tetrahydroxychalcone + 3 CO2 + 4 CoA. Its pathway is secondary metabolite biosynthesis; flavonoid biosynthesis. In terms of biological role, the primary product of this enzyme is 4,2',4',6'-tetrahydroxychalcone (also termed naringenin-chalcone or chalcone) which can under specific conditions spontaneously isomerize into naringenin. In Camellia sinensis (Tea plant), this protein is Chalcone synthase 3 (CHS3).